Here is a 507-residue protein sequence, read N- to C-terminus: Cyclin-dependent kinase-like 2 (507 aa).

The region spanning Tyr4 to Phe289 is the Protein kinase domain. Residues Val10–Val18 and Lys33 contribute to the ATP site. Positions Lys45–Glu51 match the [NKR]KIAxRE motif. Asp126 serves as the catalytic Proton acceptor. The disordered stretch occupies residues Lys365–Ser392.

The protein belongs to the protein kinase superfamily. CMGC Ser/Thr protein kinase family. CDC2/CDKX subfamily.

The protein localises to the cytoplasm. Its subcellular location is the nucleus. It carries out the reaction L-seryl-[protein] + ATP = O-phospho-L-seryl-[protein] + ADP + H(+). The catalysed reaction is L-threonyl-[protein] + ATP = O-phospho-L-threonyl-[protein] + ADP + H(+). The protein is Cyclin-dependent kinase-like 2 of Rattus norvegicus (Rat).